We begin with the raw amino-acid sequence, 695 residues long: ATP-dependent zinc metalloprotease FtsH (695 aa).

The Cytoplasmic segment spans residues 1 to 15 (MNNNKQPKQGNFVKN). Residues 16–36 (ILMWVILAIVVVVGFNFFFSS) form a helical membrane-spanning segment. Over 37-139 (NQSSVDKISY…QASSSGMWVQ (103 aa)) the chain is Extracellular. The helical transmembrane segment at 140–160 (ILSYIIPMLLFVGIFWLMMGG) threads the bilayer. Residues 161–695 (MGARGGGGGG…KEKSEDETAE (535 aa)) lie on the Cytoplasmic side of the membrane. 233–240 (GPPGTGKT) contacts ATP. Residue His456 participates in Zn(2+) binding. Glu457 is a catalytic residue. Residues His460 and Asp532 each coordinate Zn(2+). Residues 657-695 (KDANANVDDFSNINIYNGDEKTDSKPEENKEKSEDETAE) form a disordered region. The span at 674-695 (GDEKTDSKPEENKEKSEDETAE) shows a compositional bias: basic and acidic residues.

It in the central section; belongs to the AAA ATPase family. This sequence in the C-terminal section; belongs to the peptidase M41 family. As to quaternary structure, homohexamer. Zn(2+) serves as cofactor.

Its subcellular location is the cell membrane. In terms of biological role, acts as a processive, ATP-dependent zinc metallopeptidase for both cytoplasmic and membrane proteins. Plays a role in the quality control of integral membrane proteins. The sequence is that of ATP-dependent zinc metalloprotease FtsH from Lactococcus lactis subsp. lactis (strain IL1403) (Streptococcus lactis).